We begin with the raw amino-acid sequence, 82 residues long: Myosin light chain alkali (82 aa).

The EF-hand domain maps to G7–N42.

In terms of assembly, myosin is a hexamer of 2 heavy chains and 4 light chains.

This Drosophila teissieri (Fruit fly) protein is Myosin light chain alkali (Mlc1).